A 393-amino-acid chain; its full sequence is MQQTKKLTHSDITIAVMSGPFLQRGEPALVSKWYRTKMALACGVDLVVELPYAFSTQKAETFANGAISILNALHVSEICFGSEDGQIENFYNTISVQKNEEETFNRLVKQFMNAGNSYAKATSEAFLHILSSEKNIDMSQPNNILGFQYIKAILMQNSSMQAQTIKRFASHYHDETFNDQHIASATSIRKQLFSENSSFTEIEPFIPKATASLLASYKQNYGTLHNWEQYFSFFKYKLMTMSPEDLRHIYEIEEGLEHRILSKIQTSSSFHSFMEALKTKRYTWTRLQRACTHILTNTTKEEIHCANIEQHAPYIRLLGMSQKGQTYLSKNKKKIELPILTHTKTFDHPTLHIDRKANSVYFSIMQEPLRAQLLKQDATHHPIRYDETTAKFL.

Residues G81, N142, and R167 each coordinate ATP.

The protein belongs to the TmcAL family.

The protein resides in the cytoplasm. The catalysed reaction is cytidine(34) in elongator tRNA(Met) + acetate + ATP = N(4)-acetylcytidine(34) in elongator tRNA(Met) + AMP + diphosphate. Functionally, catalyzes the formation of N(4)-acetylcytidine (ac(4)C) at the wobble position of elongator tRNA(Met), using acetate and ATP as substrates. First activates an acetate ion to form acetyladenylate (Ac-AMP) and then transfers the acetyl group to tRNA to form ac(4)C34. The chain is tRNA(Met) cytidine acetate ligase from Bacillus cereus (strain AH187).